Consider the following 231-residue polypeptide: PX domain-containing protein 1 (231 aa).

The region spanning 1–134 is the PX domain; the sequence is MASAVFEGTS…TFFERSPLDQ (134 aa).

This is PX domain-containing protein 1 (PXDC1) from Homo sapiens (Human).